Consider the following 1622-residue polypeptide: FK506-binding protein 5 (1622 aa).

The 92-residue stretch at 178 to 269 (GDRVSIKYAG…IFDLEVTGSK (92 aa)) folds into the PPIase FKBP-type domain. A disordered region spans residues 268–306 (SKKKEGSEPSLPSLNGQPSNAPQQSLPTQLFDNSPVPQD). The segment covering 277 to 303 (SLPSLNGQPSNAPQQSLPTQLFDNSPV) has biased composition (polar residues). Residue Arg-314 is modified to Omega-N-methylarginine. Disordered regions lie at residues 320 to 432 (RATG…GFNN) and 518 to 538 (SPPP…PPPP). The segment covering 335–432 (ESNSRNSHSN…NMNNNNGFNN (98 aa)) has biased composition (low complexity). Coiled-coil stretches lie at residues 607–827 (LVQT…ETER) and 854–961 (KKEE…LESQ). Disordered regions lie at residues 1043–1097 (KQQQ…EVVV) and 1122–1622 (EEVK…VLPL). Composition is skewed to acidic residues over residues 1050 to 1093 (KEEE…EEEK) and 1152 to 1168 (DDED…DINE). Residues 1169–1182 (EDLKNIDAEIEKMQ) are compositionally biased toward basic and acidic residues. 2 stretches are compositionally biased toward acidic residues: residues 1185-1199 (MGDE…EEEK) and 1222-1260 (ESEE…EQED). Over residues 1261 to 1271 (KVESDVEEKIV) the composition is skewed to basic and acidic residues. The segment covering 1320-1335 (DDDEDNEKDVASDSEE) has biased composition (acidic residues). The segment covering 1353–1369 (EEKVVEQVKEEINETKF) has biased composition (basic and acidic residues). Positions 1380 to 1412 (TTTEEKEEEKEEEKVEEEEEKVVEPPTIDDDET) are enriched in acidic residues. Low complexity-rich tracts occupy residues 1435 to 1449 (STTA…TSST) and 1465 to 1504 (KTSF…TPTS). Composition is skewed to polar residues over residues 1519 to 1532 (FGNS…PSTT) and 1581 to 1609 (AKSN…SPLT).

The protein belongs to the FKBP-type PPIase family.

It carries out the reaction [protein]-peptidylproline (omega=180) = [protein]-peptidylproline (omega=0). Inhibited by both FK506 and rapamycin. Functionally, PPIases accelerate the folding of proteins by catalyzing the cis-trans isomerization of proline imidic peptide bonds in oligopeptides. The chain is FK506-binding protein 5 (fkbp5) from Dictyostelium discoideum (Social amoeba).